Consider the following 256-residue polypeptide: Large ribosomal subunit protein eL8B (256 aa).

Positions 1–37 are disordered; sequence MAPGKKVAPAPFGAKSTKSNKAKNPLTHSTPKNFGIG.

Belongs to the eukaryotic ribosomal protein eL8 family. As to quaternary structure, component of the large ribosomal subunit (LSU). Mature yeast ribosomes consist of a small (40S) and a large (60S) subunit. The 40S small subunit contains 1 molecule of ribosomal RNA (18S rRNA) and 33 different proteins (encoded by 57 genes). The large 60S subunit contains 3 rRNA molecules (25S, 5.8S and 5S rRNA) and 46 different proteins (encoded by 81 genes).

It is found in the cytoplasm. In terms of biological role, component of the ribosome, a large ribonucleoprotein complex responsible for the synthesis of proteins in the cell. The small ribosomal subunit (SSU) binds messenger RNAs (mRNAs) and translates the encoded message by selecting cognate aminoacyl-transfer RNA (tRNA) molecules. The large subunit (LSU) contains the ribosomal catalytic site termed the peptidyl transferase center (PTC), which catalyzes the formation of peptide bonds, thereby polymerizing the amino acids delivered by tRNAs into a polypeptide chain. The nascent polypeptides leave the ribosome through a tunnel in the LSU and interact with protein factors that function in enzymatic processing, targeting, and the membrane insertion of nascent chains at the exit of the ribosomal tunnel. This Saccharomyces cerevisiae (strain ATCC 204508 / S288c) (Baker's yeast) protein is Large ribosomal subunit protein eL8B.